Reading from the N-terminus, the 414-residue chain is Imidazolonepropionase (414 aa).

The Fe(3+) site is built by His-73 and His-75. Zn(2+)-binding residues include His-73 and His-75. Positions 82, 145, and 178 each coordinate 4-imidazolone-5-propanoate. Tyr-145 contacts N-formimidoyl-L-glutamate. His-249 contacts Fe(3+). Residue His-249 participates in Zn(2+) binding. Gln-252 contributes to the 4-imidazolone-5-propanoate binding site. Residue Asp-324 coordinates Fe(3+). Asp-324 lines the Zn(2+) pocket. 2 residues coordinate N-formimidoyl-L-glutamate: Asn-326 and Gly-328. Ser-329 is a binding site for 4-imidazolone-5-propanoate.

This sequence belongs to the metallo-dependent hydrolases superfamily. HutI family. It depends on Zn(2+) as a cofactor. Requires Fe(3+) as cofactor.

It localises to the cytoplasm. The catalysed reaction is 4-imidazolone-5-propanoate + H2O = N-formimidoyl-L-glutamate. It functions in the pathway amino-acid degradation; L-histidine degradation into L-glutamate; N-formimidoyl-L-glutamate from L-histidine: step 3/3. Catalyzes the hydrolytic cleavage of the carbon-nitrogen bond in imidazolone-5-propanoate to yield N-formimidoyl-L-glutamate. It is the third step in the universal histidine degradation pathway. This Shewanella denitrificans (strain OS217 / ATCC BAA-1090 / DSM 15013) protein is Imidazolonepropionase.